Reading from the N-terminus, the 189-residue chain is Phosphoheptose isomerase (189 aa).

The region spanning 34-189 is the SIS domain; that stretch reads AVETLKNGNK…CQIIDNELSH (156 aa). Residue 49–51 coordinates substrate; sequence NGG. Zn(2+)-binding residues include His-58 and Glu-62. Residues Glu-62, 91 to 92, 117 to 119, Ser-122, and Gln-169 contribute to the substrate site; these read ND and STS. Zn(2+) contacts are provided by Gln-169 and His-177.

This sequence belongs to the SIS family. GmhA subfamily. In terms of assembly, homotetramer. Requires Zn(2+) as cofactor.

It localises to the cytoplasm. The enzyme catalyses 2 D-sedoheptulose 7-phosphate = D-glycero-alpha-D-manno-heptose 7-phosphate + D-glycero-beta-D-manno-heptose 7-phosphate. Its pathway is carbohydrate biosynthesis; D-glycero-D-manno-heptose 7-phosphate biosynthesis; D-glycero-alpha-D-manno-heptose 7-phosphate and D-glycero-beta-D-manno-heptose 7-phosphate from sedoheptulose 7-phosphate: step 1/1. Functionally, catalyzes the isomerization of sedoheptulose 7-phosphate in D-glycero-D-manno-heptose 7-phosphate. The chain is Phosphoheptose isomerase from Aliarcobacter butzleri (strain RM4018) (Arcobacter butzleri).